The chain runs to 313 residues: Ornithine carbamoyltransferase (313 aa).

Carbamoyl phosphate is bound by residues 57-60 (STRT), Gln84, Arg108, and 135-138 (HPTQ). L-ornithine-binding positions include Asn167, Asp231, and 235-236 (SM). Carbamoyl phosphate-binding positions include 272-273 (CL) and Arg300.

It belongs to the aspartate/ornithine carbamoyltransferase superfamily. OTCase family.

The protein localises to the cytoplasm. It catalyses the reaction carbamoyl phosphate + L-ornithine = L-citrulline + phosphate + H(+). The protein operates within amino-acid biosynthesis; L-arginine biosynthesis; L-arginine from L-ornithine and carbamoyl phosphate: step 1/3. Its function is as follows. Reversibly catalyzes the transfer of the carbamoyl group from carbamoyl phosphate (CP) to the N(epsilon) atom of ornithine (ORN) to produce L-citrulline. This chain is Ornithine carbamoyltransferase, found in Pseudothermotoga lettingae (strain ATCC BAA-301 / DSM 14385 / NBRC 107922 / TMO) (Thermotoga lettingae).